The chain runs to 158 residues: uncharacterized protein (158 aa).

A Nudix hydrolase domain is found at 3-130 (YLQRVTNCVL…DGHILDFMMK (128 aa)). The Nudix box motif lies at 34–55 (GKMESGESVRDSVIREYREETG). The Mg(2+) site is built by E49 and E53.

Belongs to the Nudix hydrolase family. Mg(2+) serves as cofactor.

This is an uncharacterized protein from Bacillus subtilis (strain 168).